We begin with the raw amino-acid sequence, 495 residues long: Cytochrome P450 710A1 (495 aa).

The chain crosses the membrane as a helical span at residues 5-25 (VSIFASLAPYLISAFLLFLLV). Cys434 contacts heme.

Belongs to the cytochrome P450 family. Requires heme as cofactor. In terms of tissue distribution, expressed in the vascular tissues of roots, shoots and leaves. Expressed in root tips and sepals. Very low expression in stems and siliques.

It localises to the membrane. It carries out the reaction 5-dehydroepisterol + NADPH + O2 + H(+) = ergosta-5,7,22,24(28)-tetraen-3beta-ol + NADP(+) + 2 H2O. It functions in the pathway steroid biosynthesis; sterol biosynthesis. Required to form the C-22 double bond in the sterol side chain. Possesses in vitro C-22 desaturase activity toward beta-sitosterol and produces stigmasterol. No activity with campesterol. The polypeptide is Cytochrome P450 710A1 (Arabidopsis thaliana (Mouse-ear cress)).